A 245-amino-acid chain; its full sequence is MVAASGTQRTRTVGLARWIVYAGSVFAGAWLATQLFYLVQIALWSFINPGSTAFMRTDAWWLSHDKPPAQIQHQWVPYDQISRNLKRALIASEDATFATNNGYDVDAILQAWEKNKARGHIVAGGSTITQQLARNLFLSREKSYIRKGQELIITWMLETVLDKERIFEIYLNSVEWGRGVYGAEAAARYYYRIPASRLGAWQSARLAVMLPKPRWFDAHRGSAYQAQRAAVIARRMGAAELPQSQ.

The helical transmembrane segment at 13–35 (VGLARWIVYAGSVFAGAWLATQL) threads the bilayer.

This sequence belongs to the glycosyltransferase 51 family.

The protein resides in the cell inner membrane. It carries out the reaction [GlcNAc-(1-&gt;4)-Mur2Ac(oyl-L-Ala-gamma-D-Glu-L-Lys-D-Ala-D-Ala)](n)-di-trans,octa-cis-undecaprenyl diphosphate + beta-D-GlcNAc-(1-&gt;4)-Mur2Ac(oyl-L-Ala-gamma-D-Glu-L-Lys-D-Ala-D-Ala)-di-trans,octa-cis-undecaprenyl diphosphate = [GlcNAc-(1-&gt;4)-Mur2Ac(oyl-L-Ala-gamma-D-Glu-L-Lys-D-Ala-D-Ala)](n+1)-di-trans,octa-cis-undecaprenyl diphosphate + di-trans,octa-cis-undecaprenyl diphosphate + H(+). It functions in the pathway cell wall biogenesis; peptidoglycan biosynthesis. Peptidoglycan polymerase that catalyzes glycan chain elongation from lipid-linked precursors. The sequence is that of Biosynthetic peptidoglycan transglycosylase from Burkholderia vietnamiensis (strain G4 / LMG 22486) (Burkholderia cepacia (strain R1808)).